We begin with the raw amino-acid sequence, 445 residues long: Phosphoglucosamine mutase (445 aa).

The active-site Phosphoserine intermediate is the S101. The Mg(2+) site is built by S101, D240, D242, and D244. Residue S101 is modified to Phosphoserine.

This sequence belongs to the phosphohexose mutase family. It depends on Mg(2+) as a cofactor. In terms of processing, activated by phosphorylation.

It catalyses the reaction alpha-D-glucosamine 1-phosphate = D-glucosamine 6-phosphate. Catalyzes the conversion of glucosamine-6-phosphate to glucosamine-1-phosphate. The chain is Phosphoglucosamine mutase from Pseudomonas aeruginosa (strain LESB58).